A 729-amino-acid chain; its full sequence is Capsid protein VP1 (729 aa).

Basic residues predominate over residues 1–10 (MAPPAKRAKR). Disordered stretches follow at residues 1 to 38 (MAPP…SDAA), 96 to 115 (LATD…KRTR), and 130 to 185 (KLTS…VGVS). A Nuclear localization signal motif is present at residues 4-13 (PAKRAKRGWV). The segment at 19–64 (YLGPGNSLDQGEPTNPSDAAAKEHDEAYDQYIKSGKNPYLYFSAAD) is phospholipase A2-like. Positions 25–35 (SLDQGEPTNPS) are enriched in polar residues. The segment covering 132 to 142 (TSSAAQQSSQT) has biased composition (low complexity). The span at 143–152 (MSDGTSQPDS) shows a compositional bias: polar residues. The segment covering 168–184 (GPGGSGGGGSGGGGVGV) has biased composition (gly residues). Asn-325 contacts Mg(2+).

It belongs to the parvoviridae capsid protein family.

The protein localises to the virion. It is found in the host nucleus. Its function is as follows. Capsid protein self-assembles to form an icosahedral capsid with a T=1 symmetry, about 22 nm in diameter, and consisting of 60 copies of two size variants of the capsid proteins, VP1 and VP2, which differ by the presence of an N-terminal extension in the minor protein VP1. The capsid encapsulates the genomic ssDNA. Capsid proteins are responsible for the attachment to host cell receptors. This attachment induces virion internalization predominantly through clathrin-dependent endocytosis. Binding to the host receptors also induces capsid rearrangements leading to surface exposure of VP1 N-terminus, specifically its phospholipase A2-like region and putative nuclear localization signal(s). VP1 N-terminus might serve as a lipolytic enzyme to breach the endosomal membrane during entry into host cell and might contribute to virus transport to the nucleus. The chain is Capsid protein VP1 from Mus musculus (Mouse).